A 181-amino-acid polypeptide reads, in one-letter code: Inner membrane-spanning protein YciB (181 aa).

5 helical membrane-spanning segments follow: residues 19-39 (FFDIYAATGALIVATLIQLIA), 50-70 (MHLITFALVASFGTATLIFHD), 80-100 (IVYALFAIALIAGQFLGKPIL), 118-138 (LTWYWVLFFVACGLINIYVAF), and 148-168 (FKVFGLTAATLVNTLLTVVYL).

Belongs to the YciB family.

Its subcellular location is the cell inner membrane. Plays a role in cell envelope biogenesis, maintenance of cell envelope integrity and membrane homeostasis. The chain is Inner membrane-spanning protein YciB from Shewanella amazonensis (strain ATCC BAA-1098 / SB2B).